A 293-amino-acid chain; its full sequence is Ribosomal protein L11 methyltransferase (293 aa).

Positions 145, 166, 188, and 230 each coordinate S-adenosyl-L-methionine.

This sequence belongs to the methyltransferase superfamily. PrmA family.

Its subcellular location is the cytoplasm. It catalyses the reaction L-lysyl-[protein] + 3 S-adenosyl-L-methionine = N(6),N(6),N(6)-trimethyl-L-lysyl-[protein] + 3 S-adenosyl-L-homocysteine + 3 H(+). In terms of biological role, methylates ribosomal protein L11. The polypeptide is Ribosomal protein L11 methyltransferase (Shewanella baltica (strain OS185)).